A 70-amino-acid polypeptide reads, in one-letter code: Large ribosomal subunit protein eL38 (70 aa).

K4 participates in a covalent cross-link: Glycyl lysine isopeptide (Lys-Gly) (interchain with G-Cter in SUMO2). K9 carries the post-translational modification N6-acetyllysine; alternate. K9 is covalently cross-linked (Glycyl lysine isopeptide (Lys-Gly) (interchain with G-Cter in SUMO2); alternate). K67 carries the N6-acetyllysine modification.

Belongs to the eukaryotic ribosomal protein eL38 family. Component of the large ribosomal subunit.

The protein localises to the cytoplasm. Its function is as follows. Component of the large ribosomal subunit. The ribosome is a large ribonucleoprotein complex responsible for the synthesis of proteins in the cell. The protein is Large ribosomal subunit protein eL38 (Rpl38) of Mus musculus (Mouse).